The chain runs to 98 residues: Integration host factor subunit alpha (98 aa).

The disordered stretch occupies residues 51–71 (NFDLRDKNERPGRNPKTGEDI). Basic and acidic residues predominate over residues 53–69 (DLRDKNERPGRNPKTGE).

This sequence belongs to the bacterial histone-like protein family. In terms of assembly, heterodimer of an alpha and a beta chain.

This protein is one of the two subunits of integration host factor, a specific DNA-binding protein that functions in genetic recombination as well as in transcriptional and translational control. The polypeptide is Integration host factor subunit alpha (Vibrio campbellii (strain ATCC BAA-1116)).